The chain runs to 121 residues: Small ribosomal subunit protein uS13 (121 aa).

The disordered stretch occupies residues 93–121 (RGLPMRGQRTRTNARTRKGPRKGAAALKK).

The protein belongs to the universal ribosomal protein uS13 family. Part of the 30S ribosomal subunit. Forms a loose heterodimer with protein S19. Forms two bridges to the 50S subunit in the 70S ribosome.

In terms of biological role, located at the top of the head of the 30S subunit, it contacts several helices of the 16S rRNA. In the 70S ribosome it contacts the 23S rRNA (bridge B1a) and protein L5 of the 50S subunit (bridge B1b), connecting the 2 subunits; these bridges are implicated in subunit movement. Contacts the tRNAs in the A and P-sites. This Paracidovorax citrulli (strain AAC00-1) (Acidovorax citrulli) protein is Small ribosomal subunit protein uS13.